We begin with the raw amino-acid sequence, 372 residues long: Chaperone protein DnaJ (372 aa).

Residues 5–70 (DYYDLLEVSR…EKRAGYDRYG (66 aa)) enclose the J domain. Residues 134–212 (GIQAPIHYVT…CGGSGRKRDE (79 aa)) form a CR-type zinc finger. The Zn(2+) site is built by Cys-147, Cys-150, Cys-164, Cys-167, Cys-186, Cys-189, Cys-200, and Cys-203. CXXCXGXG motif repeat units follow at residues 147-154 (CNTCQGTG), 164-171 (CNTCQGSG), 186-193 (CTTCYGEG), and 200-207 (CKKCGGSG).

The protein belongs to the DnaJ family. In terms of assembly, homodimer. The cofactor is Zn(2+).

It is found in the cytoplasm. In terms of biological role, participates actively in the response to hyperosmotic and heat shock by preventing the aggregation of stress-denatured proteins and by disaggregating proteins, also in an autonomous, DnaK-independent fashion. Unfolded proteins bind initially to DnaJ; upon interaction with the DnaJ-bound protein, DnaK hydrolyzes its bound ATP, resulting in the formation of a stable complex. GrpE releases ADP from DnaK; ATP binding to DnaK triggers the release of the substrate protein, thus completing the reaction cycle. Several rounds of ATP-dependent interactions between DnaJ, DnaK and GrpE are required for fully efficient folding. Also involved, together with DnaK and GrpE, in the DNA replication of plasmids through activation of initiation proteins. The sequence is that of Chaperone protein DnaJ from Wolbachia pipientis subsp. Culex pipiens (strain wPip).